The primary structure comprises 212 residues: Adapter protein MecA 2 (212 aa).

This sequence belongs to the MecA family. In terms of assembly, homodimer.

Its function is as follows. Enables the recognition and targeting of unfolded and aggregated proteins to the ClpC protease or to other proteins involved in proteolysis. Acts negatively in the development of competence by binding ComK and recruiting it to the ClpCP protease. When overexpressed, inhibits sporulation. Also involved in Spx degradation by ClpC. This is Adapter protein MecA 2 (mecA2) from Halalkalibacterium halodurans (strain ATCC BAA-125 / DSM 18197 / FERM 7344 / JCM 9153 / C-125) (Bacillus halodurans).